Here is a 161-residue protein sequence, read N- to C-terminus: Nucleotide-binding protein Bcep1808_2648 (161 aa).

This sequence belongs to the YajQ family.

In terms of biological role, nucleotide-binding protein. The polypeptide is Nucleotide-binding protein Bcep1808_2648 (Burkholderia vietnamiensis (strain G4 / LMG 22486) (Burkholderia cepacia (strain R1808))).